A 340-amino-acid chain; its full sequence is tRNA N6-adenosine threonylcarbamoyltransferase (340 aa).

The Fe cation site is built by His-111 and His-115. Substrate is bound by residues 134-138 (LVSGG), Asp-167, Gly-180, and Asn-276. Asp-304 lines the Fe cation pocket.

This sequence belongs to the KAE1 / TsaD family. The cofactor is Fe(2+).

The protein resides in the cytoplasm. It catalyses the reaction L-threonylcarbamoyladenylate + adenosine(37) in tRNA = N(6)-L-threonylcarbamoyladenosine(37) in tRNA + AMP + H(+). Its function is as follows. Required for the formation of a threonylcarbamoyl group on adenosine at position 37 (t(6)A37) in tRNAs that read codons beginning with adenine. Is involved in the transfer of the threonylcarbamoyl moiety of threonylcarbamoyl-AMP (TC-AMP) to the N6 group of A37, together with TsaE and TsaB. TsaD likely plays a direct catalytic role in this reaction. The chain is tRNA N6-adenosine threonylcarbamoyltransferase from Helicobacter pylori (strain Shi470).